A 60-amino-acid polypeptide reads, in one-letter code: Small ribosomal subunit protein bS21 (60 aa).

Residues Gln-36–Arg-60 form a disordered region. Positions Lys-44–Arg-60 are enriched in basic residues.

This sequence belongs to the bacterial ribosomal protein bS21 family.

The protein is Small ribosomal subunit protein bS21 (rpsU) of Synechocystis sp. (strain ATCC 27184 / PCC 6803 / Kazusa).